A 396-amino-acid chain; its full sequence is Ribosomal RNA large subunit methyltransferase I (396 aa).

A PUA domain is found at 2–81 (TVSIYLAKGR…EAIDKDFFVR (80 aa)).

This sequence belongs to the methyltransferase superfamily. RlmI family.

The protein localises to the cytoplasm. It carries out the reaction cytidine(1962) in 23S rRNA + S-adenosyl-L-methionine = 5-methylcytidine(1962) in 23S rRNA + S-adenosyl-L-homocysteine + H(+). Specifically methylates the cytosine at position 1962 (m5C1962) of 23S rRNA. In Aliivibrio fischeri (strain MJ11) (Vibrio fischeri), this protein is Ribosomal RNA large subunit methyltransferase I.